We begin with the raw amino-acid sequence, 383 residues long: MKPHFRNTVERMYRGTFFYNFNNRPILSRRNTVWLCYEVKTRGPSMPTWGAKIFRGQLYPEAKDHPEMKFLHWFRKWRQLHRDQEYEVTWYVSWSPCTRCANSVATFLAEDPKVTLTIFVARLYYFWKPDYQEALRILCQKRGGPHATMKIMNYNEFQHCWNEFVDGQGKPFKPRKNLPKHYTLLHATLGELLRHVMDPGTFTSNFNNKPWVSGQRETYLCYKVERSHNDTWVLLNQHRGFLRNQAPDRHGFPKGRHAELCFLDLIPFWKLDDQQYRVTCFTSWSPCFSCAQKMAKFISKKKHVSLCIFAARIYDDQGRRQEGLRTLHRDGAKIAVMXYSEFKHCWDTFVDHQGRPFQPWDGLDEHSQALSGRLRAILQNQGN.

The segment at 1–60 is essential for cytoplasmic localization; the sequence is MKPHFRNTVERMYRGTFFYNFNNRPILSRRNTVWLCYEVKTRGPSMPTWGAKIFRGQLYP. CMP/dCMP-type deaminase domains lie at 29–138 and 214–327; these read RRNT…LRIL and GQRE…LRTL. T32 carries the post-translational modification Phosphothreonine; by PKA. Zn(2+)-binding residues include H65, C97, and C100. The interval 209-335 is necessary for homooligomerization; it reads KPWVSGQRET…TLHRDGAKIA (127 aa). An interaction with DNA region spans residues 213-215; the sequence is SGQ. Position 218 is a phosphothreonine; by PKA and CAMK2 (T218). H257 is a Zn(2+) binding site. The active-site Proton donor is E259. Positions 287 and 290 each coordinate Zn(2+). Residues 312-319 are interaction with DNA; sequence RIYDDQGR.

The protein belongs to the cytidine and deoxycytidylate deaminase family. As to quaternary structure, homodimer. Homooligomer. Can bind RNA to form ribonucleoprotein complexes of high-molecular-mass (HMM) or low-molecular-mass (LMM). HMM is inactive and heterogeneous in protein composition because of binding nonselectively to cellular RNAs, which in turn are associated with variety of cellular proteins. The LMM form which is enzymatically active has few or no RNAs associated. Its ability to form homooligomer is distinct from its ability to assemble into HMM. Interacts with APOBEC3B, APOBEC3F, MOV10, AGO2, EIF4E, EIF4ENIF1, DCP2 and DDX6 in an RNA-dependent manner. Interacts with AGO1, AGO3 and PKA/PRKACA. The cofactor is Zn(2+).

It localises to the cytoplasm. The protein resides in the nucleus. The protein localises to the P-body. It catalyses the reaction a 2'-deoxycytidine in single-stranded DNA + H2O + H(+) = a 2'-deoxyuridine in single-stranded DNA + NH4(+). Its function is as follows. DNA deaminase (cytidine deaminase) which acts as an inhibitor of retrovirus replication and retrotransposon mobility. After the penetration of retroviral nucleocapsids into target cells of infection and the initiation of reverse transcription, it can induce the conversion of cytosine to uracil in the minus-sense single-strand viral DNA, leading to G-to-A hypermutations in the subsequent plus-strand viral DNA. The resultant detrimental levels of mutations in the proviral genome, along with a deamination-independent mechanism that works prior to the proviral integration, together exert efficient antiretroviral effects in infected target cells. Selectively targets single-stranded DNA and does not deaminate double-stranded DNA or single- or double-stranded RNA. The protein is DNA dC-&gt;dU-editing enzyme APOBEC-3G (APOBEC3G) of Erythrocebus patas (Red guenon).